An 85-amino-acid chain; its full sequence is Small ribosomal subunit protein bS20 (85 aa).

Disordered regions lie at residues 1–25 (MANI…ASIK) and 62–85 (ARKG…QVNA).

It belongs to the bacterial ribosomal protein bS20 family.

Its function is as follows. Binds directly to 16S ribosomal RNA. This is Small ribosomal subunit protein bS20 from Bacillus cereus (strain G9842).